Consider the following 105-residue polypeptide: Thioredoxin (105 aa).

The Thioredoxin domain maps to 2–105 (VKQIESKTAF…KLEATINELV (104 aa)). The residue at position 3 (Lys3) is an N6-acetyllysine. Position 8 is an N6-succinyllysine (Lys8). Active-site nucleophile residues include Cys32 and Cys35. Cys32 and Cys35 are oxidised to a cystine. The residue at position 39 (Lys39) is an N6-acetyllysine. Cys62 and Cys69 each carry S-nitrosocysteine. Cys73 is subject to S-nitrosocysteine; alternate. Lys94 is modified (N6-acetyllysine; alternate). Lys94 carries the N6-succinyllysine; alternate modification.

The protein belongs to the thioredoxin family. In terms of assembly, homodimer; disulfide-linked. Interacts with TXNIP through the redox-active site. Interacts with MAP3K5 and CASP3. In case of infection, interacts with S.typhimurium protein slrP. Interacts with APEX1; the interaction stimulates the FOS/JUN AP-1 DNA-binding activity in a redox-dependent manner. Post-translationally, in the fully reduced protein, both Cys-69 and Cys-73 are nitrosylated in response to nitric oxide (NO). When two disulfide bonds are present in the protein, only Cys-73 is nitrosylated. Cys-73 can serve as donor for nitrosylation of target proteins. In case of infection, ubiquitinated by S.typhimurium protein slrP, leading to its degradation.

The protein localises to the nucleus. Its subcellular location is the cytoplasm. It is found in the secreted. Functionally, participates in various redox reactions through the reversible oxidation of its active center dithiol to a disulfide and catalyzes dithiol-disulfide exchange reactions. Plays a role in the reversible S-nitrosylation of cysteine residues in target proteins, and thereby contributes to the response to intracellular nitric oxide. Nitrosylates the active site Cys of CASP3 in response to nitric oxide (NO), and thereby inhibits caspase-3 activity. Induces the FOS/JUN AP-1 DNA-binding activity in ionizing radiation (IR) cells through its oxidation/reduction status and stimulates AP-1 transcriptional activity. In terms of biological role, ADF augments the expression of the interleukin-2 receptor TAC (IL2R/P55). This is Thioredoxin (TXN) from Homo sapiens (Human).